A 61-amino-acid polypeptide reads, in one-letter code: Putative neurotoxin-D (61 aa).

Positions 1 to 19 (MRTTVAILLVLFALSAILA) are cleaved as a signal peptide. 3 cysteine pairs are disulfide-bonded: C31–C51, C37–C56, and C39–C58.

As to expression, expressed by the venom gland.

The protein resides in the secreted. This is Putative neurotoxin-D from Lychas mucronatus (Chinese swimming scorpion).